Here is a 332-residue protein sequence, read N- to C-terminus: L-lactate dehydrogenase A chain (332 aa).

Residues 29 to 57 (GAVG…MEDK) and Arg99 each bind NAD(+). Substrate is bound by residues Arg106, Asn138, and Arg169. Asn138 contacts NAD(+). Catalysis depends on His193, which acts as the Proton acceptor. Position 248 (Thr248) interacts with substrate.

This sequence belongs to the LDH/MDH superfamily. LDH family. As to quaternary structure, homotetramer.

The protein resides in the cytoplasm. The catalysed reaction is (S)-lactate + NAD(+) = pyruvate + NADH + H(+). It participates in fermentation; pyruvate fermentation to lactate; (S)-lactate from pyruvate: step 1/1. Its function is as follows. Interconverts simultaneously and stereospecifically pyruvate and lactate with concomitant interconversion of NADH and NAD(+). This chain is L-lactate dehydrogenase A chain (LDHA), found in Sceloporus undulatus (Eastern fence lizard).